The chain runs to 562 residues: Hemagglutinin (562 aa).

A signal peptide spans 1–15 (MTITFLILLFTVVKG). Residues 16–525 (DQICIGYHAN…VKLSNMGVYQ (510 aa)) lie on the Extracellular side of the membrane. Intrachain disulfides connect cysteine 19-cysteine 477, cysteine 57-cysteine 288, cysteine 70-cysteine 82, cysteine 105-cysteine 149, cysteine 292-cysteine 316, and cysteine 484-cysteine 488. Asparagine 25, asparagine 26, and asparagine 38 each carry an N-linked (GlcNAc...) asparagine; by host glycan. Asparagine 179, asparagine 180, and asparagine 300 each carry an N-linked (GlcNAc...) asparagine; by host glycan. N-linked (GlcNAc...) asparagine; by host glycosylation is present at asparagine 494. Residues 526-546 (ILAIYATVAGSLSLAIMIAGI) form a helical membrane-spanning segment. Residues 547–562 (SFWMCSNGSLQCRICI) lie on the Cytoplasmic side of the membrane. S-palmitoyl cysteine; by host attachment occurs at residues cysteine 551, cysteine 558, and cysteine 561.

It belongs to the influenza viruses hemagglutinin family. As to quaternary structure, homotrimer of disulfide-linked HA1-HA2. In terms of processing, palmitoylated. In natural infection, inactive HA is matured into HA1 and HA2 outside the cell by one or more trypsin-like, arginine-specific endoprotease secreted by the bronchial epithelial cells. One identified protease that may be involved in this process is secreted in lungs by club cells.

It localises to the virion membrane. Its subcellular location is the host apical cell membrane. Its function is as follows. Binds to sialic acid-containing receptors on the cell surface, bringing about the attachment of the virus particle to the cell. This attachment induces virion internalization either through clathrin-dependent endocytosis or through clathrin- and caveolin-independent pathway. Plays a major role in the determination of host range restriction and virulence. Class I viral fusion protein. Responsible for penetration of the virus into the cell cytoplasm by mediating the fusion of the membrane of the endocytosed virus particle with the endosomal membrane. Low pH in endosomes induces an irreversible conformational change in HA2, releasing the fusion hydrophobic peptide. Several trimers are required to form a competent fusion pore. The sequence is that of Hemagglutinin from Influenza A virus (strain A/Mallard/New York/6750/1978 H2N2).